Here is a 103-residue protein sequence, read N- to C-terminus: Large ribosomal subunit protein bL21 (103 aa).

It belongs to the bacterial ribosomal protein bL21 family. In terms of assembly, part of the 50S ribosomal subunit. Contacts protein L20.

Functionally, this protein binds to 23S rRNA in the presence of protein L20. This Pseudomonas syringae pv. tomato (strain ATCC BAA-871 / DC3000) protein is Large ribosomal subunit protein bL21.